A 344-amino-acid chain; its full sequence is Protein RecA (344 aa).

64–71 lines the ATP pocket; sequence GPESSGKT.

The protein belongs to the RecA family.

It is found in the cytoplasm. Can catalyze the hydrolysis of ATP in the presence of single-stranded DNA, the ATP-dependent uptake of single-stranded DNA by duplex DNA, and the ATP-dependent hybridization of homologous single-stranded DNAs. It interacts with LexA causing its activation and leading to its autocatalytic cleavage. This is Protein RecA from Paramagnetospirillum magnetotacticum (Aquaspirillum magnetotacticum).